The sequence spans 503 residues: Glycerol kinase (503 aa).

Residue Thr14 participates in ADP binding. Residues Thr14, Thr15, and Ser16 each coordinate ATP. Thr14 lines the sn-glycerol 3-phosphate pocket. An ADP-binding site is contributed by Arg18. Sn-glycerol 3-phosphate-binding residues include Arg84, Glu85, Tyr136, and Asp246. 5 residues coordinate glycerol: Arg84, Glu85, Tyr136, Asp246, and Gln247. Positions 268 and 311 each coordinate ADP. ATP contacts are provided by Thr268, Gly311, Gln315, and Gly412. Gly412 and Asn416 together coordinate ADP.

The protein belongs to the FGGY kinase family. Homotetramer and homodimer (in equilibrium). Heterodimer with EIIA-Glc. Binds 1 zinc ion per glycerol kinase EIIA-Glc dimer. The zinc ion is important for dimerization.

The catalysed reaction is glycerol + ATP = sn-glycerol 3-phosphate + ADP + H(+). The protein operates within polyol metabolism; glycerol degradation via glycerol kinase pathway; sn-glycerol 3-phosphate from glycerol: step 1/1. With respect to regulation, activity of this regulatory enzyme is affected by several metabolites. Allosterically and non-competitively inhibited by fructose 1,6-bisphosphate (FBP) and unphosphorylated phosphocarrier protein EIIA-Glc (III-Glc), an integral component of the bacterial phosphotransferase (PTS) system. Its function is as follows. Key enzyme in the regulation of glycerol uptake and metabolism. Catalyzes the phosphorylation of glycerol to yield sn-glycerol 3-phosphate. The protein is Glycerol kinase of Klebsiella pneumoniae (strain 342).